The primary structure comprises 176 residues: Ribosome maturation factor RimP (176 aa).

Belongs to the RimP family.

The protein localises to the cytoplasm. Required for maturation of 30S ribosomal subunits. This chain is Ribosome maturation factor RimP, found in Chlorobium limicola (strain DSM 245 / NBRC 103803 / 6330).